A 2595-amino-acid chain; its full sequence is Glucosylceramide transporter ABCA12 (2595 aa).

The helical transmembrane segment at 23–43 (PLWTLVLILWPVIIFIILAIT) threads the bilayer. The segment covering 109-119 (LKKPSNPKRDS) has biased composition (basic and acidic residues). The segment at 109 to 143 (LKKPSNPKRDSNLSLRSTQVPERSHTSLATVPPRP) is disordered. Residues Asn120, Asn156, Asn174, Asn214, Asn275, Asn331, Asn365, Asn381, Asn410, Asn433, Asn455, Asn526, Asn541, Asn574, Asn605, Asn645, Asn749, Asn773, Asn812, Asn823, Asn854, Asn917, and Asn960 are each glycosylated (N-linked (GlcNAc...) asparagine). Polar residues predominate over residues 120–137 (NLSLRSTQVPERSHTSLA). Helical transmembrane passes span 1062–1082 (VSYS…AAFV), 1109–1129 (FAWL…LIVI), and 1142–1162 (FILF…SYLI). Asn1167 carries N-linked (GlcNAc...) asparagine glycosylation. Helical transmembrane passes span 1171-1191 (IAAL…IVLV), 1197-1217 (LSYV…SYAS), and 1247-1267 (FGWL…IAWY). N-linked (GlcNAc...) asparagine glycosylation occurs at Asn1319. The ABC transporter 1 domain occupies 1346–1577 (VALHGVTKIY…FGDGYHLTLT (232 aa)). Residue 1378-1385 (GPNGAGKT) coordinates ATP. Residues Asn1524, Asn1663, Asn1673, Asn1686, Asn1690, and Asn1704 are each glycosylated (N-linked (GlcNAc...) asparagine). Positions 1672-1703 (SNMSLEHLTQRKVGNPSANGTSTPDDLSVSSS) are disordered. A compositionally biased stretch (polar residues) spans 1687 to 1703 (PSANGTSTPDDLSVSSS). A helical transmembrane segment spans residues 1747–1767 (LIAQVILPIVFVATAMGLGTL). 5 N-linked (GlcNAc...) asparagine glycosylation sites follow: Asn1819, Asn1835, Asn1876, Asn1921, and Asn1952. The next 7 helical transmembrane spans lie at 1979-1999 (ATIS…GYSV), 2035-2055 (FIYD…VIAI), 2072-2092 (LLLL…AGLF), 2103-2123 (VCVN…VYFL), 2143-2163 (IFLI…SQQQ), 2187-2207 (GAMF…RLLI), and 2270-2290 (IIAV…GLLG). In terms of domain architecture, ABC transporter 2 spans 2254–2489 (VQLHRLTKTY…FGRGFTVKVH (236 aa)). ATP is bound at residue 2290 to 2297 (GVNGAGKT). Asn2318, Asn2542, and Asn2547 each carry an N-linked (GlcNAc...) asparagine glycan. Over residues 2575 to 2587 (VDTSSQGSTISVD) the composition is skewed to polar residues. Positions 2575 to 2595 (VDTSSQGSTISVDSQEDQLDS) are disordered.

It belongs to the ABC transporter superfamily. ABCA family. Interacts with NR1H2 and ABCA1; this interaction is required for ABCA1 localization to the cell surface and is necessary for its normal activity and stability. As to expression, expressed in a number of other tissues besides skin, including heart, intestine, stomach, and kidney. Expressed mainly in the granular layer of the skin. Expressed in lung. Expressed in alpha and beta cells of pancreatic islets.

The protein resides in the cytoplasmic vesicle. Its subcellular location is the secretory vesicle membrane. The protein localises to the golgi apparatus membrane. It carries out the reaction ATP + H2O + phospholipidSide 1 = ADP + phosphate + phospholipidSide 2.. The catalysed reaction is a beta-D-glucosylceramide(in) + ATP + H2O = a beta-D-glucosylceramide(out) + ADP + phosphate + H(+). Transports lipids such as glucosylceramides from the outer to the inner leaflet of lamellar granules (LGs) membrane, whereby the lipids are finally transported to the keratinocyte periphery via the trans-Golgi network and LGs and released to the apical surface of the granular keratinocytes to form lipid lamellae in the stratum corneum of the epidermis, which is essential for skin barrier function. In the meantime, participates in the transport of the lamellar granules-associated proteolytic enzymes, in turn regulates desquamation and keratinocyte differentiation. Furthermore, is essential for the regulation of cellular cholesterol homeostasis by regulating ABCA1-dependent cholesterol efflux from macrophages through interaction with NR1H2 and ABCA1. Plays pleiotropic roles in regulating glucose stimulated insulin secretion from beta cells, regulating the morphology and fusion of insulin granules, lipid raft abundance and the actin cytoskeleton. Also involved in lung surfactant biogenesis. This chain is Glucosylceramide transporter ABCA12, found in Mus musculus (Mouse).